We begin with the raw amino-acid sequence, 495 residues long: Protein adenylyltransferase Fic (495 aa).

The disordered stretch occupies residues 1–23 (MGTEAEPPSPPSPPAQQQEQANP). Residues 36 to 58 (LYRLVLFFIAGSLTAWMFHAFSS) traverse the membrane as a helical segment. TPR repeat units lie at residues 121 to 154 (ALVSLRMAQDMYLTGKDDKAARLFEHALALAPRH) and 155 to 189 (PEVLLRYGEFLEHNQRNIVLADQYYFQALTISPSN). The Inhibitory (S/T)XXXE(G/N) motif motif lies at 246-251 (SVGIEG). Residues E250 and 331 to 334 (VGGH) each bind ATP. The region spanning 300–435 (ITIKDILELH…IRPFVRFIAD (136 aa)) is the Fido domain. The active site involves H378. ATP is bound by residues 382–389 (DGNGRTSR), 414–415 (YY), and N422.

It belongs to the fic family. In terms of assembly, homodimer.

The protein localises to the membrane. The catalysed reaction is L-tyrosyl-[protein] + ATP = O-(5'-adenylyl)-L-tyrosyl-[protein] + diphosphate. It carries out the reaction L-threonyl-[protein] + ATP = 3-O-(5'-adenylyl)-L-threonyl-[protein] + diphosphate. The enzyme catalyses 3-O-(5'-adenylyl)-L-threonyl-[protein] + H2O = L-threonyl-[protein] + AMP + H(+). With respect to regulation, the side chain of Glu-250 determines which of the two opposing activities (AMPylase or de-AMPylase) will take place. In response to endoplasmic reticulum stress, mediates de-AMPylase activity. Adenylyltransferase activity is inhibited by the inhibitory helix present at the N-terminus: Glu-250 binds ATP and competes with ATP-binding at Arg-389, thereby preventing adenylyltransferase activity. In unstressed cells, disengagement of Glu-250 promotes adenylyltransferase activity. Activation dissociates ATP-binding from Glu-250, allowing ordered binding of the entire ATP moiety with the alpha-phosphate in an orientation that is productive for accepting an incoming target hydroxyl side chain. Protein that can both mediate the addition of adenosine 5'-monophosphate (AMP) to specific residues of target proteins (AMPylation), and the removal of the same modification from target proteins (de-AMPylation), depending on the context. The side chain of Glu-250 determines which of the two opposing activities (AMPylase or de-AMPylase) will take place. Acts as a key regulator of the unfolded protein response (UPR) by mediating AMPylation or de-AMPylation of Hsc70-3/BiP. In unstressed cells, acts as an adenylyltransferase by mediating AMPylation of Hsc70-3/BiP at 'Thr-518', thereby inactivating it. In response to endoplasmic reticulum stress, acts as a phosphodiesterase by mediating removal of ATP (de-AMPylation) from Hsc70-3/BiP at 'Thr-518', leading to restore HSPA5/BiP activity. The chain is Protein adenylyltransferase Fic from Drosophila erecta (Fruit fly).